Reading from the N-terminus, the 118-residue chain is Protein TusC (118 aa).

It belongs to the DsrF/TusC family. Heterohexamer, formed by a dimer of trimers. The hexameric TusBCD complex contains 2 copies each of TusB, TusC and TusD. The TusBCD complex interacts with TusE.

It localises to the cytoplasm. Part of a sulfur-relay system required for 2-thiolation of 5-methylaminomethyl-2-thiouridine (mnm(5)s(2)U) at tRNA wobble positions. The sequence is that of Protein TusC from Salmonella paratyphi C (strain RKS4594).